The sequence spans 508 residues: Lysine--tRNA ligase (508 aa).

Residues E418 and E425 each contribute to the Mg(2+) site.

It belongs to the class-II aminoacyl-tRNA synthetase family. Homodimer. Mg(2+) serves as cofactor.

It is found in the cytoplasm. The enzyme catalyses tRNA(Lys) + L-lysine + ATP = L-lysyl-tRNA(Lys) + AMP + diphosphate. The protein is Lysine--tRNA ligase of Burkholderia mallei (strain NCTC 10247).